The primary structure comprises 848 residues: MNNNDLFQASRRRFLAQLGGLTVAGMLGPSLLTPRRATAAQAATDAVISKEGILTGSHWGAIRATVKDGRFVAAKPFELDKYPSKMIAGLPDHVHNAARIRYPMVRVDWLRKRHLSDTSQRGDNRFVRVSWDEALDMFYEELERVQKTHGPSALLTASGWQSTGMFHNASGMLAKAIALHGNSVGTGGDYSTGAAQVILPRVVGSMEVYEQQTSWPLVLQNSKTIVLWGSDLLKNQQANWWCPDHDVYEYYAQLKAKVAAGEIEVISIDPVVTSTHEYLGREHVKHIAVNPQTDVPLQLALAHTLYSENLYDKNFLANYCVGFEQFLPYLLGEKDGQPKDAAWAEKLTGIDAETIRGLARQMAANRTQIIAGWCVQRMQHGEQWAWMIVVLAAMLGQIGLPGGGFGFGWHYNGAGTPGRKGVILSGFSGSTSIPPVHDNSDYKGYSSTIPIARFIDAILEPGKVINWNGKSVKLPPLKMCIFAGTNPFHRHQQINRIIEGLRKLETVIAIDNQWTSTCRFADIVLPATTQFERNDLDQYGNHSNRGIIAMKQVVPPQFEARNDFDIFRELCRRFNREEAFTEGLDEMGWLKRIWQEGVQQGKGRGVHLPAFDDFWNNKEYVEFDHPQMFVRHQAFREDPDLEPLGTPSGLIEIYSKTIADMNYDDCQGHPMWFEKIERSHGGPGSQKYPLHLQSVHPDFRLHSQLCESETLRQQYTVAGKEPVFINPQDASARGIRNGDVVRVFNARGQVLAGAVVSDRYAPGVARIHEGAWYDPDKGGEPGALCKYGNPNVLTIDIGTSQLAQATSAHTTLVEIEKYNGTVEQVTAFNGPVEMVAQCEYVPASQVKS.

A signal peptide (tat-type signal) is located at residues 1-39 (MNNNDLFQASRRRFLAQLGGLTVAGMLGPSLLTPRRATA). Position 191 (Ser191) interacts with Mo-bis(molybdopterin guanine dinucleotide).

It belongs to the prokaryotic molybdopterin-containing oxidoreductase family. As to quaternary structure, interacts with the N-terminal domain of TorC. Mo-bis(molybdopterin guanine dinucleotide) is required as a cofactor. Exported by the Tat system. The position of the signal peptide cleavage has been experimentally proven.

The protein localises to the periplasm. It carries out the reaction trimethylamine + 2 Fe(III)-[cytochrome c] + H2O = trimethylamine N-oxide + 2 Fe(II)-[cytochrome c] + 3 H(+). Reduces trimethylamine-N-oxide (TMAO) into trimethylamine; an anaerobic reaction coupled to energy-yielding reactions. This Escherichia coli (strain K12) protein is Trimethylamine-N-oxide reductase 1 (torA).